Here is a 453-residue protein sequence, read N- to C-terminus: Glutamyl-tRNA(Gln) amidotransferase subunit A (453 aa).

Active-site charge relay system residues include Lys56 and Ser131. Ser155 serves as the catalytic Acyl-ester intermediate.

It belongs to the amidase family. GatA subfamily. Heterotrimer of A, B and C subunits.

The enzyme catalyses L-glutamyl-tRNA(Gln) + L-glutamine + ATP + H2O = L-glutaminyl-tRNA(Gln) + L-glutamate + ADP + phosphate + H(+). Its function is as follows. Allows the formation of correctly charged Gln-tRNA(Gln) through the transamidation of misacylated Glu-tRNA(Gln) in organisms which lack glutaminyl-tRNA synthetase. The reaction takes place in the presence of glutamine and ATP through an activated gamma-phospho-Glu-tRNA(Gln). This chain is Glutamyl-tRNA(Gln) amidotransferase subunit A, found in Campylobacter jejuni subsp. jejuni serotype O:6 (strain 81116 / NCTC 11828).